Here is a 285-residue protein sequence, read N- to C-terminus: Urease accessory protein UreD (285 aa).

It belongs to the UreD family. UreD, UreF and UreG form a complex that acts as a GTP-hydrolysis-dependent molecular chaperone, activating the urease apoprotein by helping to assemble the nickel containing metallocenter of UreC. The UreE protein probably delivers the nickel.

Its subcellular location is the cytoplasm. In terms of biological role, required for maturation of urease via the functional incorporation of the urease nickel metallocenter. In Picosynechococcus sp. (strain ATCC 27264 / PCC 7002 / PR-6) (Agmenellum quadruplicatum), this protein is Urease accessory protein UreD.